The chain runs to 118 residues: Small ribosomal subunit protein uS13 (118 aa).

It belongs to the universal ribosomal protein uS13 family. As to quaternary structure, part of the 30S ribosomal subunit. Forms a loose heterodimer with protein S19. Forms two bridges to the 50S subunit in the 70S ribosome.

Its function is as follows. Located at the top of the head of the 30S subunit, it contacts several helices of the 16S rRNA. In the 70S ribosome it contacts the 23S rRNA (bridge B1a) and protein L5 of the 50S subunit (bridge B1b), connecting the 2 subunits; these bridges are implicated in subunit movement. Contacts the tRNAs in the A and P-sites. This Carsonella ruddii (strain PV) protein is Small ribosomal subunit protein uS13.